The sequence spans 597 residues: Protein unc-93 homolog B1 (597 aa).

The segment at 1-29 (MEAEPPLYPMAGAAGPQGDEDLLGVPDGP) is disordered. A run of 5 helical transmembrane segments spans residues 64–84 (VLAASAGGMLTYGVYLGLLQM), 110–130 (KMLMGINVTPIAALLYTPVLI), 132–152 (FFGTKWMMFLAVGIYALFVST), 160–180 (TLVPSAVALGMAIVPLWASMG), and 223–243 (IFYSFFHLSFACAQLPMIYFL). 2 N-linked (GlcNAc...) asparagine glycosylation sites follow: N251 and N272. 5 helical membrane passes run 285-305 (LIVVESVLMAVAFLAMLLVLG), 343-363 (LVPFFIYSGFEVLFACTGIAL), 378-398 (LLVAYSLGASAASLLGLLGLW), 403-423 (VPLVAGAGVHLLLTFILFFWA), and 428-448 (VLQHSWILYVAAALWGVGSAL). N449 carries N-linked (GlcNAc...) asparagine glycosylation. 2 consecutive transmembrane segments (helical) span residues 469-489 (FIFTIYHWWQAVAIFTVYLGS) and 491-511 (LHMKAKLAVLLVTLVAAAVSY). The segment at 522–597 (VAPRQPRIPR…AQGGDGPEEQ (76 aa)) is disordered. S547 and S550 each carry phosphoserine.

This sequence belongs to the unc-93 family. In terms of assembly, interacts with TLR3, TLR5, TLR7, and TLR9 (probably via transmembrane domain). Post-translationally, N-glycosylated. Expressed in plasmocytoid dendritic cells (at protein level). Highly expressed in antigen-presenting cells. Expressed in heart, and at lower level in kidney. Expressed at low level in other tissues.

The protein localises to the endoplasmic reticulum membrane. It localises to the endosome. The protein resides in the lysosome. Its subcellular location is the cytoplasmic vesicle. It is found in the phagosome. Plays an important role in innate and adaptive immunity by regulating nucleotide-sensing Toll-like receptor (TLR) signaling. Required for the transport of a subset of TLRs (including TLR3, TLR7 and TLR9) from the endoplasmic reticulum to endolysosomes where they can engage pathogen nucleotides and activate signaling cascades. May play a role in autoreactive B-cells removal. In Homo sapiens (Human), this protein is Protein unc-93 homolog B1.